A 470-amino-acid polypeptide reads, in one-letter code: Methylenetetrahydrofolate--tRNA-(uracil-5-)-methyltransferase TrmFO (470 aa).

Gly-10 to Gly-15 serves as a coordination point for FAD.

The protein belongs to the MnmG family. TrmFO subfamily. Requires FAD as cofactor.

The protein resides in the cytoplasm. It carries out the reaction uridine(54) in tRNA + (6R)-5,10-methylene-5,6,7,8-tetrahydrofolate + NADH + H(+) = 5-methyluridine(54) in tRNA + (6S)-5,6,7,8-tetrahydrofolate + NAD(+). The enzyme catalyses uridine(54) in tRNA + (6R)-5,10-methylene-5,6,7,8-tetrahydrofolate + NADPH + H(+) = 5-methyluridine(54) in tRNA + (6S)-5,6,7,8-tetrahydrofolate + NADP(+). Functionally, catalyzes the folate-dependent formation of 5-methyl-uridine at position 54 (M-5-U54) in all tRNAs. The sequence is that of Methylenetetrahydrofolate--tRNA-(uracil-5-)-methyltransferase TrmFO from Prochlorococcus marinus (strain MIT 9312).